The primary structure comprises 1020 residues: Protein SCAR3 (1020 aa).

3 disordered regions span residues 167–198 (NLSQ…DMSR), 351–382 (DEKP…LRKR), and 802–827 (DYLS…GRKE). The segment covering 174 to 191 (KFQKDKKHCKMKKKKTSS) has biased composition (basic residues). The segment covering 365 to 382 (FHSKDNENDKSESGLRKR) has biased composition (basic and acidic residues). Polar residues predominate over residues 802–814 (DYLSDNHSLSNSE). One can recognise a WH2 domain in the interval 954-972 (ETGDFLQQIRTQQFNLRPV).

Belongs to the SCAR/WAVE family. In terms of assembly, binds BRK1. Interacts with SPK1, ABI1, ABI2, ABI3 and ABI4. As to expression, expressed in expanding cotyledons, expanding leaves and expanding siliques containing developing embryos. Detected in unopened flower buds. Reduced expression in mature leaves and mature cotyledons.

Its subcellular location is the cytoplasm. The protein localises to the cytoskeleton. Functionally, involved in regulation of actin and microtubule organization. Part of a WAVE complex that activates the Arp2/3 complex. Regulates trichome branch positioning and expansion. This Arabidopsis thaliana (Mouse-ear cress) protein is Protein SCAR3 (SCAR3).